The primary structure comprises 104 residues: Protein METHYLENE BLUE SENSITIVITY 2 (104 aa).

The span at 1–11 (MTGKAKPKKHT) shows a compositional bias: basic residues. Disordered stretches follow at residues 1–46 (MTGK…GHAK) and 64–104 (IHHE…SLKK). Composition is skewed to basic and acidic residues over residues 36–46 (RTGKEKGGHAK) and 73–82 (LTYEEPRNLH).

Its subcellular location is the nucleus. It is found in the cytoplasm. It localises to the stress granule. Functionally, required for acclimation to reactive oxygen species (ROS) responses downstream of beta-cyclocitral, including singlet oxygen 1O(2) detoxification reactions, especially upon light-mediated photooxidative stress, and leading to programmed cell death. Prevents leaf senescence. This Arabidopsis thaliana (Mouse-ear cress) protein is Protein METHYLENE BLUE SENSITIVITY 2.